A 234-amino-acid polypeptide reads, in one-letter code: Conidial surface nicotinamide adenine dinucleotide glycohydrolase nadA (234 aa).

The first 20 residues, 1-20 (MIFTNAILVISALLPATVLS), serve as a signal peptide directing secretion. Positions 21–117 (LQHTEDSLFP…LDTEEQPILG (97 aa)) are thump. Disulfide bonds link Cys33-Cys80 and Cys38-Cys50. N-linked (GlcNAc...) asparagine glycosylation is found at Asn45, Asn95, and Asn118. The TNT domain occupies 120-212 (TLPVGMKLDR…GLIDDGYLRR (93 aa)). Arg129 is an active-site residue. The NAD(+) site is built by Phe130, Thr136, and Arg148. Gln194 is a catalytic residue. Ser216, Asp219, Glu220, and Glu223 together coordinate Ca(2+).

It belongs to the fungal surface NADase family. As to quaternary structure, homodimer. N-glycosylated.

The protein resides in the secreted. It catalyses the reaction NAD(+) + H2O = ADP-D-ribose + nicotinamide + H(+). The enzyme catalyses NADP(+) + H2O = ADP-D-ribose 2'-phosphate + nicotinamide + H(+). With respect to regulation, the catalytic activity is positively regulated by calcium via its binding to the calcium-binding site. In terms of biological role, conidial surface nicotinamide adenine dinucleotide glycohydrolase that cleave NAD(+) and NADP(+) but not their reduced counterparts, NADH and NADPH. Lacks both ADP-ribosyl cyclase and base exchange activity and does not mediate synthesis of calcium messengers cADPR or NAADP. Plays a role in pathogenicity by depleting the host's NAD(+) pool. This Aspergillus fumigatus (strain ATCC MYA-4609 / CBS 101355 / FGSC A1100 / Af293) (Neosartorya fumigata) protein is Conidial surface nicotinamide adenine dinucleotide glycohydrolase nadA.